Reading from the N-terminus, the 88-residue chain is MMKSAILLMVSCVFMFLVVSYIQDVEGANKRCHLNQMFTGKCGNDGNKACLGDFKNKRFRYDLCQCTDATQISPSLPPQRVCNCSRPC.

Residues 1-27 (MMKSAILLMVSCVFMFLVVSYIQDVEG) form the signal peptide. Disulfide bonds link C32/C88, C42/C66, C50/C82, and C64/C84.

Belongs to the DEFL family.

The protein resides in the secreted. The chain is Putative defensin-like protein 228 (SCRL3) from Arabidopsis thaliana (Mouse-ear cress).